A 356-amino-acid polypeptide reads, in one-letter code: Sulfate/thiosulfate import ATP-binding protein CysA (356 aa).

The ABC transporter domain maps to 3 to 237; the sequence is IEVKNLVKRF…PKNSFVFHFL (235 aa). ATP is bound at residue 35–42; the sequence is GPSGSGKT.

This sequence belongs to the ABC transporter superfamily. Sulfate/tungstate importer (TC 3.A.1.6) family. In terms of assembly, the complex is composed of two ATP-binding proteins (CysA), two transmembrane proteins (CysT and CysW) and a solute-binding protein (CysP).

It is found in the cell inner membrane. It carries out the reaction sulfate(out) + ATP + H2O = sulfate(in) + ADP + phosphate + H(+). The catalysed reaction is thiosulfate(out) + ATP + H2O = thiosulfate(in) + ADP + phosphate + H(+). Its function is as follows. Part of the ABC transporter complex CysAWTP involved in sulfate/thiosulfate import. Responsible for energy coupling to the transport system. This Leptospira interrogans serogroup Icterohaemorrhagiae serovar copenhageni (strain Fiocruz L1-130) protein is Sulfate/thiosulfate import ATP-binding protein CysA.